A 117-amino-acid chain; its full sequence is Large ribosomal subunit protein uL18 (117 aa).

Belongs to the universal ribosomal protein uL18 family. Part of the 50S ribosomal subunit; part of the 5S rRNA/L5/L18/L25 subcomplex. Contacts the 5S and 23S rRNAs.

In terms of biological role, this is one of the proteins that bind and probably mediate the attachment of the 5S RNA into the large ribosomal subunit, where it forms part of the central protuberance. The protein is Large ribosomal subunit protein uL18 of Actinobacillus pleuropneumoniae serotype 5b (strain L20).